We begin with the raw amino-acid sequence, 122 residues long: Basic phospholipase A2 homolog Gln49-PLA2 (122 aa).

Intrachain disulfides connect Cys-26–Cys-115, Cys-28–Cys-44, Cys-43–Cys-95, Cys-49–Cys-122, Cys-50–Cys-88, Cys-57–Cys-81, and Cys-75–Cys-86.

This sequence belongs to the phospholipase A2 family. Group II subfamily. Q49 sub-subfamily. As to quaternary structure, monomer. In terms of tissue distribution, expressed by the venom gland.

Its subcellular location is the secreted. In terms of biological role, snake venom phospholipase A2 (PLA2) homolog that shows local myotoxicity, apparent anticoagulant activity, and neurotoxicity. Shows analgesic effect on mice due to a decrease of action potentials and nerve conduction velocity. These effects are caused by inhibition of voltage-gated ion channels (potassium (Kv) and sodium (Nav)). In addition, analgesic effects are antagonized by naloxone, implying the mechanism of action is correlated with opioid receptors (probably indirectly). Does not show detectable PLA2 activity on egg yolk phospholipids. The polypeptide is Basic phospholipase A2 homolog Gln49-PLA2 (Gloydius ussuriensis (Ussuri mamushi)).